We begin with the raw amino-acid sequence, 1092 residues long: DNA polymerase II large subunit (1092 aa).

The protein belongs to the archaeal DNA polymerase II family. As to quaternary structure, heterodimer of a large subunit and a small subunit.

It catalyses the reaction DNA(n) + a 2'-deoxyribonucleoside 5'-triphosphate = DNA(n+1) + diphosphate. The catalysed reaction is Exonucleolytic cleavage in the 3'- to 5'-direction to yield nucleoside 5'-phosphates.. In terms of biological role, possesses two activities: a DNA synthesis (polymerase) and an exonucleolytic activity that degrades single-stranded DNA in the 3'- to 5'-direction. Has a template-primer preference which is characteristic of a replicative DNA polymerase. The polypeptide is DNA polymerase II large subunit (polC) (Methanothermobacter thermautotrophicus (strain ATCC 29096 / DSM 1053 / JCM 10044 / NBRC 100330 / Delta H) (Methanobacterium thermoautotrophicum)).